The sequence spans 487 residues: Probable Xaa-Pro aminopeptidase AFUB_014460 (487 aa).

The Mn(2+) site is built by Asp267, Asp278, Glu416, and Glu455.

It belongs to the peptidase M24B family. Requires Mn(2+) as cofactor.

It catalyses the reaction Release of any N-terminal amino acid, including proline, that is linked to proline, even from a dipeptide or tripeptide.. In terms of biological role, catalyzes the removal of a penultimate prolyl residue from the N-termini of peptides. This Aspergillus fumigatus (strain CBS 144.89 / FGSC A1163 / CEA10) (Neosartorya fumigata) protein is Probable Xaa-Pro aminopeptidase AFUB_014460.